A 258-amino-acid polypeptide reads, in one-letter code: Synapse differentiation-inducing gene protein 1 (258 aa).

Topologically, residues 1–181 (MDGIIEQKSM…NFLMMPPRDH (181 aa)) are cytoplasmic. Phosphoserine is present on serine 137. Residues 182–202 (LGLSVFSMLCCFWPLGIAAFY) form a helical membrane-spanning segment. At 203-228 (LSHETNKAVAKGDLHQASTSSRRALF) the chain is on the extracellular side. The segment at residues 229 to 249 (LAVLSITIGTGVYVGVAVALI) is an intramembrane region (helical). Residues 250–258 (AYLSKNNHL) are Extracellular-facing.

The protein belongs to the CD225/Dispanin family. Homodimer. Interacts with GRIA1 and GRIA2.

It is found in the cell membrane. It localises to the early endosome membrane. The protein localises to the postsynaptic density membrane. Its subcellular location is the synapse. The protein resides in the cell projection. It is found in the dendrite. It localises to the dendritic spine. Its function is as follows. May regulate AMPA receptor content at nascent synapses, and have a role in postsynaptic development and maturation. The chain is Synapse differentiation-inducing gene protein 1 (SYNDIG1) from Homo sapiens (Human).